The following is a 231-amino-acid chain: Cytochrome c oxidase subunit 2 (231 aa).

The Mitochondrial intermembrane segment spans residues 1–30; sequence MNNFFQGYNLLFQHSLFASYMDWFHSFNCS. Residues 31–52 form a helical membrane-spanning segment; that stretch reads LLLGVLVFVTLLFGYLIFGTFY. Residues 53 to 69 are Mitochondrial matrix-facing; that stretch reads FKSKKIEYQFGELLCSI. A helical transmembrane segment spans residues 70–89; it reads FPTIILLMQMVPSLSLLYYY. Topologically, residues 90–231 are mitochondrial intermembrane; that stretch reads GLMNLDSNLT…FKSWCFGTME (142 aa). His-164, Cys-199, Glu-201, Cys-203, His-207, and Met-210 together coordinate Cu cation. Glu-201 provides a ligand contact to Mg(2+).

The protein belongs to the cytochrome c oxidase subunit 2 family. Component of the cytochrome c oxidase (complex IV, CIV), a multisubunit enzyme composed of a catalytic core of 3 subunits and several supernumerary subunits. The complex exists as a monomer or a dimer and forms supercomplexes (SCs) in the inner mitochondrial membrane with ubiquinol-cytochrome c oxidoreductase (cytochrome b-c1 complex, complex III, CIII). Cu cation serves as cofactor.

It localises to the mitochondrion inner membrane. It catalyses the reaction 4 Fe(II)-[cytochrome c] + O2 + 8 H(+)(in) = 4 Fe(III)-[cytochrome c] + 2 H2O + 4 H(+)(out). In terms of biological role, component of the cytochrome c oxidase, the last enzyme in the mitochondrial electron transport chain which drives oxidative phosphorylation. The respiratory chain contains 3 multisubunit complexes succinate dehydrogenase (complex II, CII), ubiquinol-cytochrome c oxidoreductase (cytochrome b-c1 complex, complex III, CIII) and cytochrome c oxidase (complex IV, CIV), that cooperate to transfer electrons derived from NADH and succinate to molecular oxygen, creating an electrochemical gradient over the inner membrane that drives transmembrane transport and the ATP synthase. Cytochrome c oxidase is the component of the respiratory chain that catalyzes the reduction of oxygen to water. Electrons originating from reduced cytochrome c in the intermembrane space (IMS) are transferred via the dinuclear copper A center (CU(A)) of subunit 2 and heme A of subunit 1 to the active site in subunit 1, a binuclear center (BNC) formed by heme A3 and copper B (CU(B)). The BNC reduces molecular oxygen to 2 water molecules using 4 electrons from cytochrome c in the IMS and 4 protons from the mitochondrial matrix. In Caenorhabditis elegans, this protein is Cytochrome c oxidase subunit 2.